A 689-amino-acid chain; its full sequence is DNA-directed RNA polymerase subunit beta' (689 aa).

4 residues coordinate Zn(2+): C69, C71, C87, and C90. Mg(2+) is bound by residues D489, D491, and D493.

The protein belongs to the RNA polymerase beta' chain family. RpoC1 subfamily. In plastids the minimal PEP RNA polymerase catalytic core is composed of four subunits: alpha, beta, beta', and beta''. When a (nuclear-encoded) sigma factor is associated with the core the holoenzyme is formed, which can initiate transcription. Mg(2+) is required as a cofactor. The cofactor is Zn(2+).

It is found in the plastid. Its subcellular location is the chloroplast. The catalysed reaction is RNA(n) + a ribonucleoside 5'-triphosphate = RNA(n+1) + diphosphate. In terms of biological role, DNA-dependent RNA polymerase catalyzes the transcription of DNA into RNA using the four ribonucleoside triphosphates as substrates. This is DNA-directed RNA polymerase subunit beta' from Helianthus annuus (Common sunflower).